Reading from the N-terminus, the 183-residue chain is Nucleoplasmin-like protein NO29 (183 aa).

A compositionally biased stretch (acidic residues) spans 126–166 (SDDEDLSGSEEEMEDEEEEEDDDDDDDDDDDDDDDDDEEEI). Residues 126–183 (SDDEDLSGSEEEMEDEEEEEDDDDDDDDDDDDDDDDDEEEITPIKPAKKPLKTLSRTF) are disordered.

It belongs to the nucleoplasmin family.

The protein localises to the nucleus. The protein resides in the nucleolus. The polypeptide is Nucleoplasmin-like protein NO29 (Xenopus laevis (African clawed frog)).